The sequence spans 435 residues: Probable histidine--tRNA ligase, cytoplasmic (435 aa).

This sequence belongs to the class-II aminoacyl-tRNA synthetase family.

The protein localises to the cytoplasm. The catalysed reaction is tRNA(His) + L-histidine + ATP = L-histidyl-tRNA(His) + AMP + diphosphate + H(+). The sequence is that of Probable histidine--tRNA ligase, cytoplasmic from Encephalitozoon cuniculi (strain GB-M1) (Microsporidian parasite).